We begin with the raw amino-acid sequence, 426 residues long: MSFEITILGSSGGPLEGSTCSILLKPANISYHDIINDNLPDQVLCIDAGSGMGKLTEIIHQETTTKTSYCNFLQYYPDCETVSYYYHPNVTITTPFSNFQPGRPILHTQNIFNNLQNYLISHSHLDHVCSVVINSAGFNKNMSNKILYGSHYTINAMQQHLFNGKVWPNMPSFKIVNLNYLESNRSERIGIYTVKMFDLSHGEFNKLTEDKEDAQHHSNSNSNSNNIWGKRYDRRRSSITTIPQNTSGLIIKNSEALNHHYLSSAFLITLEVPCTTKEPPPSILVFGDFESDLTSKLSRNLFIWKSIASLILRNQLKAIVLECSNCKEIAANELYGHLTPKLLIYELKQLEHECKQLDTATTSTEQPLLGLNVIVNHVKEPIADPNQESQLHDPRKRILAELNKLNEIEKLGCNISIALSGTSIIV.

The disordered stretch occupies residues 210–229; the sequence is DKEDAQHHSNSNSNSNNIWG.

The protein belongs to the cyclic nucleotide phosphodiesterase class-II family.

It catalyses the reaction a nucleoside 3',5'-cyclic phosphate + H2O = a nucleoside 5'-phosphate + H(+). The protein is 3',5'-cyclic-nucleotide phosphodiesterase (PDE1) of Candida albicans (Yeast).